The chain runs to 74 residues: Antimicrobial peptide HsAp1 (74 aa).

Positions 1–21 are cleaved as a signal peptide; the sequence is MSRRVILTLVLVTILVKTMAG. Positions 22–33 are excised as a propeptide; sequence MESKKVETTDEI. Pro65 carries the proline amide modification. A propeptide spanning residues 69-74 is cleaved from the precursor; it reads AISEQT.

The protein belongs to the non-disulfide-bridged peptide (NDBP) superfamily. Medium-length antimicrobial peptide (group 3) family. In terms of tissue distribution, expressed by the venom gland.

The protein localises to the secreted. It is found in the target cell membrane. Its function is as follows. Possesses antimicrobial activity against both Gram-negative (MIC=23.8-51.2 uM) and Gram-positive (MIC=11.8-46.5 uM) bacteria, as well as against the fungus C.tropicalis (MIC=48.6 uM). Also possesses a relatively high hemolytic activity. May act by disrupting the integrity of the bacterial cell membrane. In Heterometrus spinifer (Asia giant forest scorpion), this protein is Antimicrobial peptide HsAp1.